A 70-amino-acid polypeptide reads, in one-letter code: Conotoxin ArMKLT2-0112 (70 aa).

The signal sequence occupies residues 1 to 22 (MKLTCVLIIAVLFLTACQLTTG). Residues 23–40 (EQKDHALRSTDKNSKLTR) constitute a propeptide that is removed on maturation. At glutamine 41 the chain carries Pyrrolidone carboxylic acid. 3 disulfide bridges follow: cysteine 42/cysteine 56, cysteine 49/cysteine 60, and cysteine 55/cysteine 67.

The protein belongs to the conotoxin O1 superfamily. In terms of tissue distribution, expressed by the venom duct.

The protein resides in the secreted. The chain is Conotoxin ArMKLT2-0112 from Conus arenatus (Sand-dusted cone).